The chain runs to 149 residues: Protein K7 (149 aa).

It belongs to the orthopoxvirus OPG044 family. Interacts with DDX3; this interaction inhibits DDX3 and suppresses DDX3-mediated IFN-beta promoter induction. Interacts with TRAF6 and IRAK2; these interactions suppress TLR-dependent NF-KappaB activation.

The protein resides in the host cytoplasm. Functionally, virulence factor that affects the acute immune response to infection. Bcl-2-like protein which, through its interaction with the DEAD box RNA helicase DDX3X/DDX3, prevents TBK1/IKKepsilon-mediated IRF3 activation. Contributes to virulence by binding to the host TRAF6 and IRAK2 and preventing host NF-kappa-B activation. The protein is Protein K7 (OPG044) of Cynomys gunnisoni (Gunnison's prairie dog).